Consider the following 463-residue polypeptide: Fumarate hydratase class II (463 aa).

Substrate contacts are provided by residues 97 to 99 (SGT), 128 to 131 (HPND), 138 to 140 (SSN), and Thr-186. Residue His-187 is the Proton donor/acceptor of the active site. Ser-317 is an active-site residue. Substrate-binding positions include Ser-318 and 323 to 325 (KVN).

It belongs to the class-II fumarase/aspartase family. Fumarase subfamily. As to quaternary structure, homotetramer.

It localises to the cytoplasm. It catalyses the reaction (S)-malate = fumarate + H2O. Its pathway is carbohydrate metabolism; tricarboxylic acid cycle; (S)-malate from fumarate: step 1/1. Functionally, involved in the TCA cycle. Catalyzes the stereospecific interconversion of fumarate to L-malate. This is Fumarate hydratase class II from Helicobacter pylori (strain ATCC 700392 / 26695) (Campylobacter pylori).